Reading from the N-terminus, the 119-residue chain is Large ribosomal subunit protein bL20 (119 aa).

The protein belongs to the bacterial ribosomal protein bL20 family.

In terms of biological role, binds directly to 23S ribosomal RNA and is necessary for the in vitro assembly process of the 50S ribosomal subunit. It is not involved in the protein synthesizing functions of that subunit. The polypeptide is Large ribosomal subunit protein bL20 (Vesicomyosocius okutanii subsp. Calyptogena okutanii (strain HA)).